The following is a 27-amino-acid chain: Caerulein precursor fragment R2 (27 aa).

In terms of tissue distribution, expressed by the skin glands.

It localises to the secreted. Antimicrobial peptide. This is Caerulein precursor fragment R2 from Xenopus ruwenzoriensis (Uganda clawed frog).